The sequence spans 211 residues: Ethylene-responsive transcription factor LEP (211 aa).

Disordered regions lie at residues 1 to 21 (MNTT…TRFL) and 74 to 110 (NFVY…NDPV). Positions 19–76 (RFLGVRRRPWGRYAAEIRDPTTKERHWLGTFDTAEEAALAYDRAARSMRGTRARTNFV) form a DNA-binding region, AP2/ERF. Low complexity predominate over residues 81–92 (PPSSSVTSIVSP). The segment covering 93–107 (DDPPPPPPPPAPPSN) has biased composition (pro residues).

This sequence belongs to the AP2/ERF transcription factor family. ERF subfamily. In terms of tissue distribution, expressed in germinating seeds. Present in young shoots, at low levels, especially in leaf primordia and developing leaf blades. Also detected in vascular tissue, mostly in xylem, of young leaves, petioles and hypocotyls.

The protein localises to the nucleus. In terms of biological role, cell division-promoting factor involved in leaf blade differentiation, inflorescence branching, as well as in carpel and silique shape. Promotes the number of xylem cells. Positively regulates the gibberellin signaling pathway leading to germination, hypocotyl elongation, and leaf expansion. Probably acts as a transcriptional activator. Binds to the GCC-box pathogenesis-related promoter element. May be involved in the regulation of gene expression by stress factors and by components of stress signal transduction pathways. This Arabidopsis thaliana (Mouse-ear cress) protein is Ethylene-responsive transcription factor LEP (LEP).